Here is an 80-residue protein sequence, read N- to C-terminus: Putative UPF0377 protein YMR324C (80 aa).

The helical transmembrane segment at 13-33 (ACIFIDSVCEGIVFWGLCLFV) threads the bilayer.

This sequence belongs to the UPF0377 family.

Its subcellular location is the membrane. This Saccharomyces cerevisiae (strain ATCC 204508 / S288c) (Baker's yeast) protein is Putative UPF0377 protein YMR324C.